Reading from the N-terminus, the 536-residue chain is CUGBP Elav-like family member 2 (536 aa).

RRM domains are found at residues 58-141, 150-230, and 451-529; these read IKMF…PADS, RKLF…FADT, and ANLF…LKRS.

Belongs to the CELF/BRUNOL family.

Its subcellular location is the nucleus. It localises to the cytoplasm. In terms of biological role, RNA-binding protein implicated in the regulation of several post-transcriptional events. May be involved in pre-mRNA alternative splicing, mRNA translation repression and stability. This chain is CUGBP Elav-like family member 2 (celf2), found in Xenopus laevis (African clawed frog).